The sequence spans 877 residues: Translation initiation factor IF-2 (877 aa).

The tract at residues 48 to 289 is disordered; sequence SSFQNSAPAE…QITKRKERPL (242 aa). The segment covering 78–89 has biased composition (basic and acidic residues); the sequence is RKNEKKPEENNT. Over residues 92–101 the composition is skewed to basic residues; that stretch reads KSNRRRNNKR. Residues 102–116 are compositionally biased toward basic and acidic residues; that stretch reads RSSDRARDNKERDAK. The span at 123–132 shows a compositional bias: low complexity; it reads KAAALLQQFK. 2 stretches are compositionally biased toward basic and acidic residues: residues 135-155 and 162-189; these read QRAE…EYHE and KEQS…EKKV. Over residues 277-286 the composition is skewed to basic residues; that stretch reads PRKQITKRKE. The 170-residue stretch at 378-547 folds into the tr-type G domain; the sequence is KRPPVVTIMG…LLQADVMELK (170 aa). A G1 region spans residues 387–394; the sequence is GHVDHGKT. 387–394 is a GTP binding site; the sequence is GHVDHGKT. The interval 412–416 is G2; it reads GITQR. Positions 433-436 are G3; the sequence is DTPG. GTP contacts are provided by residues 433–437 and 487–490; these read DTPGH and NKMD. The tract at residues 487–490 is G4; sequence NKMD. The segment at 523 to 525 is G5; the sequence is SAK.

It belongs to the TRAFAC class translation factor GTPase superfamily. Classic translation factor GTPase family. IF-2 subfamily.

Its subcellular location is the cytoplasm. In terms of biological role, one of the essential components for the initiation of protein synthesis. Protects formylmethionyl-tRNA from spontaneous hydrolysis and promotes its binding to the 30S ribosomal subunits. Also involved in the hydrolysis of GTP during the formation of the 70S ribosomal complex. This Lactobacillus acidophilus (strain ATCC 700396 / NCK56 / N2 / NCFM) protein is Translation initiation factor IF-2.